Here is a 226-residue protein sequence, read N- to C-terminus: PKHD-type hydroxylase AZC_3753 (226 aa).

A Fe2OG dioxygenase domain is found at 78-178 (RILPPMFNRY…RVASFFWTQS (101 aa)). Fe cation contacts are provided by histidine 96, aspartate 98, and histidine 159. 2-oxoglutarate is bound at residue arginine 169.

The cofactor is Fe(2+). L-ascorbate is required as a cofactor.

The protein is PKHD-type hydroxylase AZC_3753 of Azorhizobium caulinodans (strain ATCC 43989 / DSM 5975 / JCM 20966 / LMG 6465 / NBRC 14845 / NCIMB 13405 / ORS 571).